Here is a 217-residue protein sequence, read N- to C-terminus: Somatotropin (217 aa).

The N-terminal stretch at M1–A27 is a signal peptide. Zn(2+) is bound at residue H46. C79 and C190 are joined by a disulfide. Phosphoserine is present on S132. E199 contributes to the Zn(2+) binding site. C207 and C215 form a disulfide bridge.

It belongs to the somatotropin/prolactin family.

It localises to the secreted. In terms of biological role, plays an important role in growth control. Its major role in stimulating body growth is to stimulate the liver and other tissues to secrete IGF1. It stimulates both the differentiation and proliferation of myoblasts. It also stimulates amino acid uptake and protein synthesis in muscle and other tissues. This chain is Somatotropin (GH1), found in Xanthonycticebus pygmaeus (Pygmy slow loris).